We begin with the raw amino-acid sequence, 211 residues long: Ethylene-responsive transcription factor LEP (211 aa).

2 disordered regions span residues 1–21 and 74–110; these read MNTT…TRFL and NFVY…NDPV. The segment at residues 19-76 is a DNA-binding region (AP2/ERF); that stretch reads RFLGVRRRPWGRYAAEIRDPTTKERHWLGTFDTAEEAALAYDRAARSMRGTRARTNFV. A compositionally biased stretch (low complexity) spans 81–92; that stretch reads PPSSSVTSIVSP. Positions 93 to 107 are enriched in pro residues; the sequence is DDPPPPPPPPAPPSN.

The protein belongs to the AP2/ERF transcription factor family. ERF subfamily. As to expression, expressed in germinating seeds. Present in young shoots, at low levels, especially in leaf primordia and developing leaf blades. Also detected in vascular tissue, mostly in xylem, of young leaves, petioles and hypocotyls.

It localises to the nucleus. Its function is as follows. Cell division-promoting factor involved in leaf blade differentiation, inflorescence branching, as well as in carpel and silique shape. Promotes the number of xylem cells. Positively regulates the gibberellin signaling pathway leading to germination, hypocotyl elongation, and leaf expansion. Probably acts as a transcriptional activator. Binds to the GCC-box pathogenesis-related promoter element. May be involved in the regulation of gene expression by stress factors and by components of stress signal transduction pathways. The protein is Ethylene-responsive transcription factor LEP (LEP) of Arabidopsis thaliana (Mouse-ear cress).